A 488-amino-acid polypeptide reads, in one-letter code: Acetyl-CoA decarbonylase/synthase complex subunit gamma (488 aa).

One can recognise a 4Fe-4S domain in the interval 1–61 (MPKKISAMDI…FEKNKKKIIE (61 aa)). 4 residues coordinate [4Fe-4S] cluster: cysteine 19, cysteine 22, cysteine 27, and cysteine 44.

Heterodimer of delta and gamma chains. The ACDS complex is made up of alpha, epsilon, beta, gamma and delta chains with a probable stoichiometry of (alpha(2)epsilon(2))(4)-beta(8)-(gamma(1)delta(1))(8). It depends on corrinoid as a cofactor. [4Fe-4S] cluster is required as a cofactor.

The enzyme catalyses 5,6,7,8-tetrahydrosarcinapterin + methyl-Co(III)-[corrinoid Fe-S protein] = 5-methyltetrahydrosarcinapterin + Co(I)-[corrinoid Fe-S protein] + H(+). Part of a complex that catalyzes the reversible cleavage of acetyl-CoA, allowing autotrophic growth from CO(2). The polypeptide is Acetyl-CoA decarbonylase/synthase complex subunit gamma (Methanocaldococcus jannaschii (strain ATCC 43067 / DSM 2661 / JAL-1 / JCM 10045 / NBRC 100440) (Methanococcus jannaschii)).